A 37-amino-acid polypeptide reads, in one-letter code: Large ribosomal subunit protein bL36 (37 aa).

It belongs to the bacterial ribosomal protein bL36 family.

This chain is Large ribosomal subunit protein bL36, found in Mycobacteroides abscessus (strain ATCC 19977 / DSM 44196 / CCUG 20993 / CIP 104536 / JCM 13569 / NCTC 13031 / TMC 1543 / L948) (Mycobacterium abscessus).